The following is an 872-amino-acid chain: MAEEKGGKQVLEESAFEEMERDFQGVLHELSGDKSLEKFRIEYERLHAVMKKSYDNEKRLMAKCRELNAEIVVNSAKVATALKLSQDDQTTIASLKKEIEKAWKMVDSAYDKEQKAKETILALKEEIVNLTKLVEQGSGLSMDQHSNIRDLLRFKEEVTKERDQLLSEVVKLRESLAQTTEQQQETERSKEEAEHAISQFQQEIQQRQNEASREFRKKEKLEKELKQIQADMDSRQTEIKALQQYVQKSKEELQKLEQQLKEQKILNERAAKELEQFQMRNAKLQQENEQHSLVCEQLSQENQQKALELKAKEEEVHQMRLDIGKLNKIREQIHKKLHHTEDQKAEVEQHKETLKNQIVGLEREVEASKKQAELDRKAMDELLRERDILNKNMLKAVNATQKQTDLVKLHEQAKRNLEGEIQNYKDEAQKQRKIIFHLEKERDRYINQASDLTQKVLMNMEDIKVRETQIFDYRKKIAESEIKLKQQQNLYEAVRSDRNLYSKNLVEAQDEITDMKRKLKIMIHQVDELKEDISAKESALVKLHLEQQRIEKEKETLKAELQKLRQQALETKHFIEKQEAEERKLLRIIAEADGERLRQKKELDQVISERDILGSQLVRRNDELALLYEKIKIQQSVLNKGESQYNQRLEDMRILRLEIKKLRREKGILARSMANVEELRQEFFHMQRELLKERTRCRALEEELENPLNVHRWRKLEASDPNAYELIQKIHTLQKRLISKTEEVVEKELLLQEKEKLYMELKHVLARQPGPEAAEQLKLYRRTLHDKKQQLKVLSSELNMYEVQSKEYKYEVEKLTNELQNLKKKYLAQKRKEQLQKNKDTAPMDNTFLMVKPNGPGFTGGGFPLRSTKMTF.

Coiled coils occupy residues 106-595 (VDSA…ADGE) and 642-839 (ESQY…QKNK).

This sequence belongs to the CFAP58 family. Interacts with ODFP2.

Its subcellular location is the cell projection. It localises to the cilium. It is found in the flagellum. The protein localises to the cytoplasm. The protein resides in the cytoskeleton. Its subcellular location is the microtubule organizing center. It localises to the centrosome. In terms of biological role, has an essential role in the assembly and organization of the sperm flagellar axoneme. Required for the elongation of the primary cilium and sperm flagellar midpiece via modulation of the Notch signaling pathway. In Homo sapiens (Human), this protein is Cilia- and flagella-associated protein 58.